The sequence spans 308 residues: Peroxisomal targeting signal 2 receptor (308 aa).

6 WD repeats span residues Asp-57–Asp-88, Glu-101–Leu-132, Gly-145–Asp-176, Glu-187–Asp-218, Gly-231–Asp-262, and Leu-274–Asn-306.

Belongs to the WD repeat peroxin-7 family. As to quaternary structure, interacts with PEX21.

It localises to the cytoplasm. Its subcellular location is the cytosol. The protein resides in the peroxisome matrix. Its function is as follows. Receptor required for the peroxisomal import of proteins containing a C-terminal PTS2-type peroxisomal targeting signal, such as 3-oxoacyl-CoA thiolase. Specifically binds to cargo proteins containing a PTS2 peroxisomal targeting signal in the cytosol. Cargo protein-binding triggers interaction with PEX21 and formation of a ternary complex composed of PEX21 and PEX7 along with PTS2-containing cargo proteins, which is tranlocated into peroxisomes by passing through the PEX13-PEX14 docking complex. The protein is Peroxisomal targeting signal 2 receptor (pex7) of Schizosaccharomyces pombe (strain 972 / ATCC 24843) (Fission yeast).